A 140-amino-acid polypeptide reads, in one-letter code: Putative pre-16S rRNA nuclease (140 aa).

The protein belongs to the YqgF nuclease family.

The protein resides in the cytoplasm. Could be a nuclease involved in processing of the 5'-end of pre-16S rRNA. The polypeptide is Putative pre-16S rRNA nuclease (Aeromonas hydrophila).